A 403-amino-acid chain; its full sequence is Formate-dependent phosphoribosylglycinamide formyltransferase (403 aa).

N(1)-(5-phospho-beta-D-ribosyl)glycinamide is bound by residues 27 to 28 (EL) and Glu87. Residues Arg120, Lys161, 166–171 (SSGKGQ), 201–204 (EGFV), and Glu209 contribute to the ATP site. The 195-residue stretch at 125–319 (RLAAEELGLP…EFELHARAIL (195 aa)) folds into the ATP-grasp domain. Positions 278 and 290 each coordinate Mg(2+). N(1)-(5-phospho-beta-D-ribosyl)glycinamide is bound by residues Asp297, Lys366, and 373–374 (RR). Residues 382–403 (GPDVETARSRAREAASRVEPVA) are disordered. Residues 386-397 (ETARSRAREAAS) show a composition bias toward basic and acidic residues.

The protein belongs to the PurK/PurT family. In terms of assembly, homodimer.

It catalyses the reaction N(1)-(5-phospho-beta-D-ribosyl)glycinamide + formate + ATP = N(2)-formyl-N(1)-(5-phospho-beta-D-ribosyl)glycinamide + ADP + phosphate + H(+). The protein operates within purine metabolism; IMP biosynthesis via de novo pathway; N(2)-formyl-N(1)-(5-phospho-D-ribosyl)glycinamide from N(1)-(5-phospho-D-ribosyl)glycinamide (formate route): step 1/1. Involved in the de novo purine biosynthesis. Catalyzes the transfer of formate to 5-phospho-ribosyl-glycinamide (GAR), producing 5-phospho-ribosyl-N-formylglycinamide (FGAR). Formate is provided by PurU via hydrolysis of 10-formyl-tetrahydrofolate. The protein is Formate-dependent phosphoribosylglycinamide formyltransferase of Rhodococcus jostii (strain RHA1).